A 329-amino-acid chain; its full sequence is G-protein coupled bile acid receptor 1 (329 aa).

Over 1–18 the chain is Extracellular; the sequence is MMSHNTTELSAIPRGVQE. Asparagine 5 is a glycosylation site (N-linked (GlcNAc...) asparagine). Residues 19-39 form a helical membrane-spanning segment; it reads LSLVLASLIVIANLLLALGIV. At 40-49 the chain is on the cytoplasmic side; sequence LDRHLRSPPA. Residues 50–70 traverse the membrane as a helical segment; that stretch reads GCFFLSLLLAGLLTGLALPTL. Topologically, residues 71 to 84 are extracellular; sequence PGLWNRSHQGYWSC. A glycan (N-linked (GlcNAc...) asparagine) is linked at asparagine 75. Cysteine 84 and cysteine 154 are joined by a disulfide. Residues 85–105 form a helical membrane-spanning segment; sequence LLLHLAPNFCFLSLLANLLLV. Residues 106 to 124 are Cytoplasmic-facing; sequence HGERYMAVLQPLRPHGSVR. A helical transmembrane segment spans residues 125–145; that stretch reads LALFLTWISSLLFASLPALGW. At 146 to 157 the chain is on the extracellular side; that stretch reads NHWSPGANCSSQ. Asparagine 153 carries N-linked (GlcNAc...) asparagine glycosylation. Residues 158 to 178 form a helical membrane-spanning segment; the sequence is AIFPAPYLYLEVYGLLLPAVG. Topologically, residues 179-229 are cytoplasmic; sequence ATALLSVRVLATAHHQLREIRRLERAVCRDAPSTLARALTWRQARAQAGAT. The chain crosses the membrane as a helical span at residues 230–250; the sequence is LLFLLCWGPYVATLLLSVLAY. Residues 251–260 lie on the Extracellular side of the membrane; it reads ERRPPLGPVT. Residues 261–281 form a helical membrane-spanning segment; the sequence is LLSLISLGSASAAVVPVAMGL. Topologically, residues 282-329 are cytoplasmic; that stretch reads GDQRYTAPWRTAAQRWLQVLRGRPKRANPGPSTAYHSSSQCSTDLDLN. The segment at 306–329 is disordered; it reads KRANPGPSTAYHSSSQCSTDLDLN. The span at 311-329 shows a compositional bias: polar residues; sequence GPSTAYHSSSQCSTDLDLN.

Belongs to the G-protein coupled receptor 1 family.

The protein resides in the cell membrane. Functionally, receptor for bile acid. Bile acid-binding induces its internalization, activation of extracellular signal-regulated kinase and intracellular cAMP production. May be involved in the suppression of macrophage functions by bile acids. Involved in bile acid promoted GLP1R secretion. This Rattus norvegicus (Rat) protein is G-protein coupled bile acid receptor 1 (Gpbar1).